The sequence spans 336 residues: Glutamyl endopeptidase (336 aa).

The N-terminal stretch at 1 to 29 is a signal peptide; the sequence is MKGKFLKVSSLFVATLTTATLVSSPAANA. A propeptide spanning residues 30–68 is cleaved from the precursor; that stretch reads LSSKAMDNHPQQTQSSKQQTPKIQKGGNLKPLEQREHAN. Residues 34 to 61 form a disordered region; that stretch reads AMDNHPQQTQSSKQQTPKIQKGGNLKPL. A compositionally biased stretch (low complexity) spans 39 to 51; sequence PQQTQSSKQQTPK. Catalysis depends on charge relay system residues histidine 119, aspartate 161, and serine 237. The segment at 283–336 is disordered; the sequence is FANDDQPNNPDNPDNPNNPDNPNNPDEPNNPDNPNNPDNPDNGDNNNSDNPDAA. Over residues 286-336 the composition is skewed to low complexity; sequence DDQPNNPDNPDNPNNPDNPNNPDEPNNPDNPNNPDNPDNGDNNNSDNPDAA. Repeat copies occupy residues 289 to 291, 292 to 294, 295 to 297, 298 to 300, 301 to 303, 304 to 306, 310 to 312, 313 to 315, 316 to 318, 319 to 321, and 322 to 324. Positions 289–324 are 11 X 3 AA repeats of P-[DN]-N; it reads PNNPDNPDNPNNPDNPNNPDEPNNPDNPNNPDNPDN.

The protein belongs to the peptidase S1B family. In terms of processing, proteolytically cleaved by aureolysin (aur). This cleavage leads to the activation of SspA.

The protein resides in the secreted. The catalysed reaction is Preferential cleavage: Glu-|-Xaa, Asp-|-Xaa.. In terms of biological role, preferentially cleaves peptide bonds on the carboxyl-terminal side of aspartate and glutamate. Along with other extracellular proteases it is involved in colonization and infection of human tissues. Required for proteolytic maturation of thiol protease SspB and inactivation of SspC, an inhibitor of SspB. It is the most important protease for degradation of fibronectin-binding protein (FnBP) and surface protein A, which are involved in adherence to host cells. May also protect bacteria against host defense mechanism by cleaving the immunoglobulin classes IgG, IgA and IgM. May be involved in the stability of secreted lipases. In Staphylococcus aureus (strain NCTC 8325 / PS 47), this protein is Glutamyl endopeptidase (sspA).